A 657-amino-acid polypeptide reads, in one-letter code: ER degradation-enhancing alpha-mannosidase-like protein 1 (657 aa).

At 1 to 4 (MQWR) the chain is on the cytoplasmic side. Residues 5–25 (ALVLGLVLLRLGLHGVLWLVF) traverse the membrane as a helical; Signal-anchor for type II membrane protein segment. At 26–657 (GLGPSMGFYQ…RQIDQMVGLI (632 aa)) the chain is on the lumenal side. The disordered stretch occupies residues 48–94 (SPDGPASPTSGPVGRPGGVSGPSWLQPPGTGAAQSPRKAPRRPGPGM). N-linked (GlcNAc...) asparagine glycans are attached at residues asparagine 181, asparagine 198, asparagine 299, asparagine 342, and asparagine 624.

The protein belongs to the glycosyl hydrolase 47 family. As to quaternary structure, interacts with DNAJC10. Interacts with DERL2 and DERL3. Binds to SEL1L.

The protein localises to the endoplasmic reticulum membrane. Extracts misfolded glycoproteins, but not glycoproteins undergoing productive folding, from the calnexin cycle. It is directly involved in endoplasmic reticulum-associated degradation (ERAD) and targets misfolded glycoproteins for degradation in an N-glycan-independent manner, probably by forming a complex with SEL1L. It has low mannosidase activity, catalyzing mannose trimming from Man8GlcNAc2 to Man7GlcNAc2. This is ER degradation-enhancing alpha-mannosidase-like protein 1 (EDEM1) from Homo sapiens (Human).